A 105-amino-acid chain; its full sequence is MRRNHGRGKKNRGSAGSIQCDKCGSVTPKDKAIKRFRIQSLIEQASFDDLKQATIYDVFEVPRMGYKSQFCVSCACHAKIVRVRSSQARKIRYGFNPNRVASAHN.

It belongs to the eukaryotic ribosomal protein eS26 family. As to quaternary structure, component of the small ribosomal subunit.

The protein localises to the cytoplasm. This Encephalitozoon cuniculi (strain GB-M1) (Microsporidian parasite) protein is Small ribosomal subunit protein eS26 (RPS26).